The following is a 372-amino-acid chain: Spermidine/putrescine import ATP-binding protein PotA (372 aa).

One can recognise an ABC transporter domain in the interval 11–241 (IELRSIKKSY…PANLFVARFI (231 aa)). An ATP-binding site is contributed by 43-50 (GPSGCGKT).

It belongs to the ABC transporter superfamily. Spermidine/putrescine importer (TC 3.A.1.11.1) family. As to quaternary structure, the complex is composed of two ATP-binding proteins (PotA), two transmembrane proteins (PotB and PotC) and a solute-binding protein (PotD).

It localises to the cell inner membrane. The enzyme catalyses ATP + H2O + polyamine-[polyamine-binding protein]Side 1 = ADP + phosphate + polyamineSide 2 + [polyamine-binding protein]Side 1.. Part of the ABC transporter complex PotABCD involved in spermidine/putrescine import. Responsible for energy coupling to the transport system. The protein is Spermidine/putrescine import ATP-binding protein PotA of Haemophilus influenzae (strain ATCC 51907 / DSM 11121 / KW20 / Rd).